Reading from the N-terminus, the 201-residue chain is Nucleoside triphosphate pyrophosphatase (201 aa).

Asp77 acts as the Proton acceptor in catalysis.

The protein belongs to the Maf family. The cofactor is a divalent metal cation.

It localises to the cytoplasm. It catalyses the reaction a ribonucleoside 5'-triphosphate + H2O = a ribonucleoside 5'-phosphate + diphosphate + H(+). The enzyme catalyses a 2'-deoxyribonucleoside 5'-triphosphate + H2O = a 2'-deoxyribonucleoside 5'-phosphate + diphosphate + H(+). Nucleoside triphosphate pyrophosphatase. May have a dual role in cell division arrest and in preventing the incorporation of modified nucleotides into cellular nucleic acids. The polypeptide is Nucleoside triphosphate pyrophosphatase (Rickettsia akari (strain Hartford)).